We begin with the raw amino-acid sequence, 257 residues long: Hydroxyacylglutathione hydrolase (257 aa).

Zn(2+)-binding residues include histidine 54, histidine 56, aspartate 58, histidine 59, histidine 113, aspartate 137, and histidine 175.

Belongs to the metallo-beta-lactamase superfamily. Glyoxalase II family. As to quaternary structure, monomer. Zn(2+) serves as cofactor.

The catalysed reaction is an S-(2-hydroxyacyl)glutathione + H2O = a 2-hydroxy carboxylate + glutathione + H(+). It functions in the pathway secondary metabolite metabolism; methylglyoxal degradation; (R)-lactate from methylglyoxal: step 2/2. Functionally, thiolesterase that catalyzes the hydrolysis of S-D-lactoyl-glutathione to form glutathione and D-lactic acid. This is Hydroxyacylglutathione hydrolase from Microcystis aeruginosa (strain NIES-843 / IAM M-2473).